Reading from the N-terminus, the 90-residue chain is Protein RALF-like 29 (90 aa).

Residues 1–25 (MIKTKEVTFVTILIVLCVFISTIHA) form the signal peptide. Intrachain disulfides connect Cys41–Cys50 and Cys63–Cys69.

Belongs to the plant rapid alkalinization factor (RALF) family.

Its subcellular location is the secreted. Cell signaling peptide that may regulate plant stress, growth, and development. Mediates a rapid alkalinization of extracellular space by mediating a transient increase in the cytoplasmic Ca(2+) concentration leading to a calcium-dependent signaling events through a cell surface receptor and a concomitant activation of some intracellular mitogen-activated protein kinases. The protein is Protein RALF-like 29 (RALFL29) of Arabidopsis thaliana (Mouse-ear cress).